The sequence spans 119 residues: Large ribosomal subunit protein uL22 (119 aa).

It belongs to the universal ribosomal protein uL22 family. In terms of assembly, part of the 50S ribosomal subunit.

This protein binds specifically to 23S rRNA; its binding is stimulated by other ribosomal proteins, e.g. L4, L17, and L20. It is important during the early stages of 50S assembly. It makes multiple contacts with different domains of the 23S rRNA in the assembled 50S subunit and ribosome. Its function is as follows. The globular domain of the protein is located near the polypeptide exit tunnel on the outside of the subunit, while an extended beta-hairpin is found that lines the wall of the exit tunnel in the center of the 70S ribosome. The chain is Large ribosomal subunit protein uL22 from Tropheryma whipplei (strain TW08/27) (Whipple's bacillus).